We begin with the raw amino-acid sequence, 345 residues long: 4-hydroxyproline 2-epimerase (345 aa).

Glutamine 85 provides a ligand contact to substrate. The active-site Proton acceptor is the serine 93. Residues 94–95 (GS) and aspartate 251 each bind substrate. Cysteine 255 (proton donor) is an active-site residue. Residue 256–257 (GT) participates in substrate binding.

This sequence belongs to the proline racemase family.

The catalysed reaction is trans-4-hydroxy-L-proline = cis-4-hydroxy-D-proline. Its function is as follows. Catalyzes the epimerization of trans-4-hydroxy-L-proline (t4LHyp) to cis-4-hydroxy-D-proline (c4DHyp). May be involved in a degradation pathway of t4LHyp. Can also catalyze the epimerization of trans-3-hydroxy-L-proline (t3LHyp) to cis-3-hydroxy-D-proline (c3DHyp) in vitro, albeit with 2-fold lower efficiency. Displays no proline racemase activity. The sequence is that of 4-hydroxyproline 2-epimerase from Rhizobium etli (strain ATCC 51251 / DSM 11541 / JCM 21823 / NBRC 15573 / CFN 42).